Consider the following 509-residue polypeptide: Fumarate hydratase, mitochondrial (509 aa).

The N-terminal 43 residues, 1-43 (MYRSARSLHRFSASLSDLRAAQRSIKARNVCPAPGLRHQTVRM), are a transit peptide targeting the mitochondrion. Substrate contacts are provided by residues 144–146 (SGT), 175–178 (HPND), 185–187 (SSN), and threonine 233. The active-site Proton donor/acceptor is the histidine 234. The active site involves serine 364. Substrate-binding positions include serine 365 and 370–372 (KVN).

Belongs to the class-II fumarase/aspartase family. Fumarase subfamily. As to quaternary structure, homotetramer.

The protein resides in the mitochondrion. It is found in the cytoplasm. Its subcellular location is the cytosol. The protein localises to the nucleus. It localises to the chromosome. The enzyme catalyses (S)-malate = fumarate + H2O. The protein operates within carbohydrate metabolism; tricarboxylic acid cycle; (S)-malate from fumarate: step 1/1. Catalyzes the reversible stereospecific interconversion of fumarate to L-malate. Experiments in other species have demonstrated that specific isoforms of this protein act in defined pathways and favor one direction over the other. Its function is as follows. Catalyzes the hydration of fumarate to L-malate in the tricarboxylic acid (TCA) cycle to facilitate a transition step in the production of energy in the form of NADH. In terms of biological role, catalyzes the dehydration of L-malate to fumarate. Fumarate metabolism in the cytosol plays a role during urea cycle and arginine metabolism; fumarate being a by-product of the urea cycle and amino-acid catabolism. Also plays a role in DNA repair by promoting non-homologous end-joining (NHEJ). In response to DNA damage translocates to the nucleus and accumulates at DNA double-strand breaks (DSBs): acts by catalyzing formation of fumarate. The protein is Fumarate hydratase, mitochondrial of Danio rerio (Zebrafish).